A 400-amino-acid chain; its full sequence is Forkhead box protein Q1 (400 aa).

The interval methionine 1–arginine 112 is disordered. Over residues leucine 32–glycine 54 the composition is skewed to low complexity. 2 stretches are compositionally biased toward gly residues: residues serine 55 to glutamate 66 and cysteine 95 to glycine 104. The segment at residues lysine 115–lysine 210 is a DNA-binding region (fork-head). The interval serine 213–phenylalanine 264 is disordered. Pro residues predominate over residues alanine 228–alanine 239. A compositionally biased stretch (low complexity) spans proline 240–proline 251.

Expressed in kidney and stomach. Expression in the outer medulla of the kidney and the transitional epithelium. Expressed in the hair follicle medulla.

The protein resides in the nucleus. Its function is as follows. Plays a role in hair follicle differentiation. This is Forkhead box protein Q1 (Foxq1) from Mus musculus (Mouse).